We begin with the raw amino-acid sequence, 154 residues long: Ribonuclease H (154 aa).

Positions 5–146 constitute an RNase H type-1 domain; it reads EQNIVYLYCD…ADELANRGID (142 aa). Mg(2+)-binding residues include aspartate 14, glutamate 52, aspartate 74, and aspartate 138.

Belongs to the RNase H family. As to quaternary structure, monomer. Requires Mg(2+) as cofactor.

Its subcellular location is the cytoplasm. The catalysed reaction is Endonucleolytic cleavage to 5'-phosphomonoester.. Functionally, endonuclease that specifically degrades the RNA of RNA-DNA hybrids. The sequence is that of Ribonuclease H from Coxiella burnetii (strain CbuK_Q154) (Coxiella burnetii (strain Q154)).